The sequence spans 399 residues: CCA-adding enzyme (399 aa).

Residues Gly32 and Arg35 each coordinate ATP. CTP is bound by residues Gly32 and Arg35. Mg(2+)-binding residues include Asp45 and Asp47. Arg116, Asp159, Arg162, Arg165, and Arg168 together coordinate ATP. Arg116, Asp159, Arg162, Arg165, and Arg168 together coordinate CTP.

The protein belongs to the tRNA nucleotidyltransferase/poly(A) polymerase family. Bacterial CCA-adding enzyme type 3 subfamily. In terms of assembly, homodimer. It depends on Mg(2+) as a cofactor.

The catalysed reaction is a tRNA precursor + 2 CTP + ATP = a tRNA with a 3' CCA end + 3 diphosphate. It carries out the reaction a tRNA with a 3' CCA end + 2 CTP + ATP = a tRNA with a 3' CCACCA end + 3 diphosphate. Functionally, catalyzes the addition and repair of the essential 3'-terminal CCA sequence in tRNAs without using a nucleic acid template. Adds these three nucleotides in the order of C, C, and A to the tRNA nucleotide-73, using CTP and ATP as substrates and producing inorganic pyrophosphate. tRNA 3'-terminal CCA addition is required both for tRNA processing and repair. Also involved in tRNA surveillance by mediating tandem CCA addition to generate a CCACCA at the 3' terminus of unstable tRNAs. While stable tRNAs receive only 3'-terminal CCA, unstable tRNAs are marked with CCACCA and rapidly degraded. The sequence is that of CCA-adding enzyme from Streptococcus pneumoniae serotype 19F (strain G54).